The primary structure comprises 600 residues: Zinc metalloproteinase-disintegrin-like stejnihagin-B (600 aa).

The N-terminal stretch at 1–20 is a signal peptide; that stretch reads MIEVLLVTICLAVFPYQGSS. A propeptide spanning residues 21 to 191 is cleaved from the precursor; sequence IILESGNVND…KASQLVVTAE (171 aa). Glutamine 192 carries the pyrrolidone carboxylic acid modification. One can recognise a Peptidase M12B domain in the interval 198 to 389; that stretch reads RYVKLAIVAD…YNPQCILNAL (192 aa). 2 N-linked (GlcNAc...) asparagine glycosylation sites follow: asparagine 261 and asparagine 317. Intrachain disulfides connect cysteine 306/cysteine 384, cysteine 346/cysteine 368, and cysteine 348/cysteine 351. A Zn(2+)-binding site is contributed by histidine 331. Residue glutamate 332 is part of the active site. Residues histidine 335 and histidine 341 each coordinate Zn(2+). Residues 397-483 enclose the Disintegrin domain; that stretch reads PPVCGNELLE…DCPTDSFHRN (87 aa). Ca(2+) is bound by residues valine 399, asparagine 402, leucine 404, glutamate 406, glutamate 409, and aspartate 412. 14 disulfide bridges follow: cysteine 400–cysteine 429, cysteine 411–cysteine 424, cysteine 413–cysteine 419, cysteine 423–cysteine 446, cysteine 437–cysteine 443, cysteine 442–cysteine 468, cysteine 455–cysteine 475, cysteine 462–cysteine 494, cysteine 487–cysteine 499, cysteine 506–cysteine 556, cysteine 521–cysteine 565, cysteine 534–cysteine 544, cysteine 551–cysteine 587, and cysteine 581–cysteine 593. The N-linked (GlcNAc...) asparagine glycan is linked to asparagine 425. A D/ECD-tripeptide motif is present at residues 461 to 463; the sequence is ECD. Residue asparagine 467 is glycosylated (N-linked (GlcNAc...) asparagine). Asparagine 513 carries an N-linked (GlcNAc...) asparagine glycan.

This sequence belongs to the venom metalloproteinase (M12B) family. P-III subfamily. P-IIIa sub-subfamily. Monomer. Requires Zn(2+) as cofactor. In terms of tissue distribution, expressed by the venom gland.

Its subcellular location is the secreted. This metalloproteinase-disintegrin-like impairs hemostasis in the envenomed animal. This Trimeresurus stejnegeri (Chinese green tree viper) protein is Zinc metalloproteinase-disintegrin-like stejnihagin-B.